The chain runs to 150 residues: Large ribosomal subunit protein uL13 (150 aa).

A disordered region spans residues E130–Q150.

The protein belongs to the universal ribosomal protein uL13 family. As to quaternary structure, part of the 50S ribosomal subunit.

In terms of biological role, this protein is one of the early assembly proteins of the 50S ribosomal subunit, although it is not seen to bind rRNA by itself. It is important during the early stages of 50S assembly. In Synechococcus sp. (strain CC9311), this protein is Large ribosomal subunit protein uL13.